Consider the following 622-residue polypeptide: MSASSSDPFHSFAKTSFTSKAAKRATAHSLPPLPGPGDLPPGMNVEYDVAIVGSGPIGCTYARELVEAGFNVAMFEIGEIDSGLKIGSHKKNTVEYQKNIDKFVNVIQGQLMPVSVPVNTMVVDTLSPASWQASTFFVRNGANPEQDPLRNLSGQAVTRVVGGMSTHWTCATPRFEKLQRPLLVKNDSKADDAEWDRLYKKAESYFKTGTTQFAESIRHNLVLKKLQEEYKGVRDFQQIPLAATRQSPTFVEWSSAHTVFDLENRPNKDAPKQRFNLFPAVACTNVRRDNANSEIVGLDVRDLHGGKSITIKAKVYILTAGAVHNAQLLAASGFGQLGRPDPAKPLPSLLPYLGTHITEQTLVFCQTVMSTELINSVTADMTIVGKPGHPDYSVTYTPGNPNNKHPDWWNEKVKKHMMDHQEDPLPIPFEDPEPQVTTLFQATHPWHTQIHRDAFSYGAVQQSIDSRLIVDWRFFGRTEPKEENKLWFSDKITDAYNLRQPTFDFRFPGGREAEDMMTDMCVMSAKIGGFLPGSYPQFMEPGLVLHLGGTHRMGFDEKADKCCVDTDSRVFGFKNLFLGGCGNIPTAYAANPTLTAMSLAIKSCEYIKKNFEPSPNPVKHHN.

A signal peptide spans 1–28; sequence MSASSSDPFHSFAKTSFTSKAAKRATAH. A propeptide spanning residues 29–37 is cleaved from the precursor; sequence SLPPLPGPG. Tele-8alpha-FAD histidine is present on His-167. Substrate contacts are provided by Gln-449 and His-451. His-546 functions as the Proton acceptor in the catalytic mechanism. The active site involves Asn-591.

It belongs to the GMC oxidoreductase family. In terms of assembly, homotetramer. The cofactor is FAD.

The protein resides in the periplasm. The enzyme catalyses D-glucose + O2 = 2-dehydro-D-glucose + H2O2. Its function is as follows. Catalyzes the oxidation of various aldopyranoses and disaccharides on carbon-2 to the corresponding 2-keto sugars concomitant with the reduction of O(2) to H(2)O(2). Plays an important role in lignin degradation of wood rot fungi by supplying the essential cosubstrate H(2)O(2) for the ligninolytic peroxidases, lignin peroxidase and manganese-dependent peroxidase. The preferred substrate is D-glucose which is converted to 2-dehydro-D-glucose, an intermediate of a secondary metabolic pathway leading to the antibiotic cortalcerone. Also acts on D-xylose, together with D-glucose the major sugars derived from wood, on L-sorbose, D-galactose and 1,5-anhydroglucitol, a diagnostic marker of diabetes mellitus. The polypeptide is Pyranose 2-oxidase (P2OX) (Trametes hirsuta (White-rot fungus)).